The primary structure comprises 537 residues: Hexosyltransferase GAUT11 (537 aa).

The Cytoplasmic segment spans residues 1 to 16 (MRRWPVDHRRRGRRRL). Residues 17 to 37 (SSWIWFLLGSFSVAGLVLFIV) form a helical; Signal-anchor for type II membrane protein membrane-spanning segment. At 38–537 (QHYHHQQDPS…HPYLQDCVTA (500 aa)) the chain is on the lumenal side. N-linked (GlcNAc...) asparagine glycans are attached at residues Asn-66, Asn-247, Asn-299, Asn-403, Asn-436, and Asn-525.

It belongs to the glycosyltransferase 8 family. Monomer. In terms of tissue distribution, expressed in roots, inflorescences, siliques, seeds, leaves and stems.

The protein resides in the golgi apparatus membrane. It carries out the reaction [(1-&gt;4)-alpha-D-galacturonosyl](n) + UDP-alpha-D-galacturonate = [(1-&gt;4)-alpha-D-galacturonosyl](n+1) + UDP + H(+). It participates in glycan metabolism; pectin biosynthesis. Its function is as follows. Glycosyltransferase involved in pectin and/or xylans biosynthesis in cell walls. Required for the biosynthesis of pectin in seed coat epidermal (SCE) cells. Collaboratively with MUCI70, essential for the accumulation of seed mucilage, a gelatinous wall rich in unbranched rhamnogalacturonan I (RG I), and for shaping the surface morphology of seeds. Catalyzes homogalacturonan (HG) elongation by acting as an HG alpha-1,4 galacturonic acid transferase. The polypeptide is Hexosyltransferase GAUT11 (Arabidopsis thaliana (Mouse-ear cress)).